The sequence spans 260 residues: MGRSPCCEKAHTNRGAWTKEEDERLVAYVRAHGEGCWRSLPRAAGLLRCGKSCRLRWINYLRPDLKRGNFTADEDDLIVKLHSLLGNKWSLIAARLPGRTDNEIKNYWNTHIRRKLLGSGIDPVTHRRVAGGAATTISFQPSPNTAVAAAAETAAQAPIKAEETAAVKAPRCPDLNLDLCISPPCQHEDDGEEEEEELDLIKPAVVKREALQAGHGHGHGLCLGCGLGGQKGAAGCSCSNGHHFLGLRTSVLDFRGLEMK.

2 HTH myb-type domains span residues 9–61 and 62–116; these read KAHT…INYL and RPDL…RRKL. DNA-binding regions (H-T-H motif) lie at residues 37–61 and 89–112; these read WRSLPRAAGLLRCGKSCRLRWINYL and WSLIAARLPGRTDNEIKNYWNTHI.

As to expression, mainly expressed in the aerial parts and, to a lower extent, in roots.

The protein localises to the nucleus. Transcription factor that negatively regulates the expression of caffeic acid O-methyl-transferase genes (COMTs) and of other genes involved in the biosynthesis of lignin, thus preventing lignification. This Zea mays (Maize) protein is Myb transcription factor 42.